The primary structure comprises 66 residues: Cold shock protein CspD (66 aa).

Residues 4–63 enclose the CSD domain; that stretch reads GKVKWFNNEKGFGFIEVEGGDDVFVHFTAIEGDGYKSLEEGQEVSFEIVEGNRGPQASNV.

It is found in the cytoplasm. This chain is Cold shock protein CspD (cspD), found in Bacillus subtilis (strain 168).